We begin with the raw amino-acid sequence, 231 residues long: Uracil-DNA glycosylase (231 aa).

Asp70 functions as the Proton acceptor in the catalytic mechanism.

This sequence belongs to the uracil-DNA glycosylase (UDG) superfamily. UNG family.

Its subcellular location is the cytoplasm. The catalysed reaction is Hydrolyzes single-stranded DNA or mismatched double-stranded DNA and polynucleotides, releasing free uracil.. Excises uracil residues from the DNA which can arise as a result of misincorporation of dUMP residues by DNA polymerase or due to deamination of cytosine. The polypeptide is Uracil-DNA glycosylase (Pseudomonas fluorescens (strain Pf0-1)).